A 211-amino-acid polypeptide reads, in one-letter code: ATP phosphoribosyltransferase (211 aa).

It belongs to the ATP phosphoribosyltransferase family. Short subfamily. In terms of assembly, heteromultimer composed of HisG and HisZ subunits.

Its subcellular location is the cytoplasm. It carries out the reaction 1-(5-phospho-beta-D-ribosyl)-ATP + diphosphate = 5-phospho-alpha-D-ribose 1-diphosphate + ATP. It functions in the pathway amino-acid biosynthesis; L-histidine biosynthesis; L-histidine from 5-phospho-alpha-D-ribose 1-diphosphate: step 1/9. Its function is as follows. Catalyzes the condensation of ATP and 5-phosphoribose 1-diphosphate to form N'-(5'-phosphoribosyl)-ATP (PR-ATP). Has a crucial role in the pathway because the rate of histidine biosynthesis seems to be controlled primarily by regulation of HisG enzymatic activity. The polypeptide is ATP phosphoribosyltransferase (Pseudomonas syringae pv. tomato (strain ATCC BAA-871 / DC3000)).